A 1434-amino-acid chain; its full sequence is MQNNKNYTEKFITDKVMRRDYSKIKSNFEGPNLLEIQVESFKRFMEKDLKEVISSIFPLKSPQGKYTLAFKGLKIKQPTKDESACRDEGKTFETPIYIDLELTDNYTGEVKRAQRNTKTGEDGIYLGAIPKMTEKGTFVINGIEKFVISQIVRSPGIYVLGKSSIKLNGSRKRLFEGKICEIYPSKGTLMLGYIPKDRHNIQIVARDSSGDNAQTFSVTTLLKAFGLTSAEILKIFNNEKEIRESLEIEKYAPEYIFENSQENEIIFKIYSDAHDIHEKADRRESNNKLKEEYIEQGSPLLSKLKQLIFNYVEKNDEIDALLHENKDVEDASFIKNNKKLYDEREEIINCIISEKAAKDIVELLGINIKNIETLRHLGKASYQIALQQHFFNKRLYDISSAGRYKFEKKLLLSERLYQKVIANDIIDKKNNILIPKDTLITKEHIELIKKESRDKNIKWTKKINLLPTALESEIEQFLEYESIAVYKDNDLRDETTEIVGLASGCKLQTLTVADLVATTSYIYNLNYEIGEFDDIDHLGNKRLKLIHELLRARIATSMARIEKFINEKLAISDGSSNNITNVNDKGIDTELDREIEESDMSDEEKKKAISVKSIINTKQFQSLVKDFFNSHQLIQFIDQQNPLAELTNKRRISAMGPGGISREDPNLDIRDVHHSHSSRICPIETPEGMNIGLIMSLASLAKVDENGFIVAPYYVVEDGVVKEDYKYLTAHEDDNYIIAESSVQLDENKRILDEQVVARYRGSTGLFSPNEVDFIDIVPKQVVSIAASAIPFIENDDGARALMGSNMQRQATPLIKPYAPIVGTGTEFKIAHDSGMAVVAKNDGVVEFVDSQKIIIRNDNDKLDDYKLIKYRKSNQDTCNNQIPIVKVGQRVHKSETIGDGPAMQNGELALGRNILVGYTTWRGYNFEDAIIISERLVDQDVFTSIHIDEHTIQCMKTKNGDEEITRDMPNVSDTAKRFLDNQGIVLVGAEVHEGDVLVGKTTPRGNVETAPEDRLLQTIFGDKSKTVKDSSLKVKHGQEGIVAAVKRIKSSDENGSELPDDVIEIIKVYIVQKRKIQVGDKMAGRHGNKGIVSKVVPIQDMPFLKDGTPLDIMLNPLGVPSRMNIGQILELHLGYAAAEIGKKQLIQIAIDQLGYEKYISLFGINEIIAKKLYENISNLIKHKQAKQAKDIDLIDVTIILKELGLSYDDIGIKISTPVFDGANHDDIVSIMNEANIDIENNKGKQVLYDGRTGEPFDGLISVGLTYMLKLDHMVDDKIHSRSVGPYSKITQQPLGGKSQNGGQRFGEMEVWALEAYGAAYNLLEILTIKSDDVQGRNQAYNAIIKGHDVVADGMPESFKLLTKQMQGLGLCITVETKDDRMVDINEYTLNQNRLNNDDDEVILDENLKEINDSNEEIFNTNFNNNDYDDEENF.

It belongs to the RNA polymerase beta chain family. The RNAP catalytic core consists of 2 alpha, 1 beta, 1 beta' and 1 omega subunit. When a sigma factor is associated with the core the holoenzyme is formed, which can initiate transcription.

It catalyses the reaction RNA(n) + a ribonucleoside 5'-triphosphate = RNA(n+1) + diphosphate. Its function is as follows. DNA-dependent RNA polymerase catalyzes the transcription of DNA into RNA using the four ribonucleoside triphosphates as substrates. This is DNA-directed RNA polymerase subunit beta from Ureaplasma parvum serovar 3 (strain ATCC 700970).